The following is a 1055-amino-acid chain: Activated CDC42 kinase 1 (1055 aa).

An SAM-like domain region spans residues 1-110 (MQPEEGTGWL…PSPTPGSLPG (110 aa)). Positions 91–110 (SQHSQSTFRKPSPTPGSLPG) are disordered. Thr113 bears the Phosphothreonine mark. Residues 126–385 (LRLLEKLGDG…PTFVALRDFL (260 aa)) enclose the Protein kinase domain. Residues 132 to 140 (LGDGSFGVV) and Lys158 each bind ATP. The active-site Proton acceptor is the Asp252. The residue at position 284 (Tyr284) is a Phosphotyrosine; by SRC and autocatalysis. An SH3 domain is found at 388-448 (AQPTDMRALQ…PRNVVTSVAG (61 aa)). The 13-residue stretch at 454-466 (ISQPLQNSFIHTG) folds into the CRIB domain. The segment at 505–548 (RPTQHLGRVKREPPPRPPQPAIFTQKTTYDPVSEDPDPLSSDFK) is disordered. A phosphotyrosine mark is found at Pro518 and Tyr533. Residues 638-667 (DWDARPLPPPPAYDDVAQDEDDFEVCSINS) are required for interaction with SRC. Residues 647–650 (PPAY) form a required for interaction with NEDD4 region. The interval 737 to 855 (TGQLTPSPTP…QVIQAPGPRA (119 aa)) is disordered. The tract at residues 748–891 (GDDKPQVPPR…PYLERYQRFL (144 aa)) is EBD domain. Composition is skewed to pro residues over residues 753–764 (QVPPRVPIPPRP) and 787–798 (PASPPRVPPREP). A compositionally biased stretch (low complexity) spans 817–827 (PLPHRLSSSPG). Phosphotyrosine is present on Tyr842. Arg854 carries the post-translational modification Omega-N-methylarginine. A phosphotyrosine mark is found at Tyr874 and Tyr887. Ser896 bears the Phosphoserine mark. The disordered stretch occupies residues 896-952 (SPEEPAALPVPPLLPPPSTPAPAAPTATVRPMPQAAPDPKANFSTNNSNPGARPPSL). Positions 903 to 918 (LPVPPLLPPPSTPAPA) are enriched in pro residues. The UBA domain maps to 973–1013 (PADKVQMLQAMVHGVTTEECQAALQSHSWSVQRAAQYLKVE).

This sequence belongs to the protein kinase superfamily. Tyr protein kinase family. Homodimer. Interacts with CSPG4 (activated). Interacts with MERTK (activated); stimulates autophosphorylation. May interact (phosphorylated) with HSP90AB1; maintains kinase activity. Interacts with NPHP1. Interacts with SNX9 (via SH3 domain). Interacts with SRC (via SH2 and SH3 domain). Part of a collagen stimulated complex involved in cell migration composed of CDC42, CRK, TNK2 and BCAR1/p130cas. Interacts with BCAR1/p130cas via SH3 domains. Forms complexes with GRB2 and numerous receptor tyrosine kinases (RTK) including LTK, AXL or PDGFRL, in which GRB2 promotes RTK recruitment by TNK2. Interacts with CDC42. Interacts with EGFR, and this interaction is dependent on EGF stimulation and kinase activity of EGFR. Interacts (via kinase domain) with AKT1. Interacts with NEDD4 (via WW3 domain). NEDD4L and EGF promote association with NEDD4. The cofactor is Mg(2+). Post-translationally, autophosphorylation regulates kinase activity. Phosphorylation on Tyr-533 is required for interaction with SRC and is observed during association with clathrin-coated pits. In terms of processing, polyubiquitinated by NEDD4 and NEDD4L. Degradation can be induced by EGF and is lysosome-dependent. Ubiquitously present in all tissues tested. Highly expressed in the adult central nervous system (CNS); hippocampus, neocortex, and cerebellum, both at dendritic spines and presynaptic axon terminals. Levels are strongly increased during enhanced neural activity.

Its subcellular location is the cell membrane. The protein resides in the nucleus. It is found in the endosome. It localises to the cell junction. The protein localises to the adherens junction. Its subcellular location is the cytoplasmic vesicle membrane. The protein resides in the cytoplasmic vesicle. It is found in the clathrin-coated vesicle. It localises to the membrane. The protein localises to the clathrin-coated pit. Its subcellular location is the cytoplasm. The protein resides in the cytosol. The catalysed reaction is L-tyrosyl-[protein] + ATP = O-phospho-L-tyrosyl-[protein] + ADP + H(+). It carries out the reaction L-seryl-[protein] + ATP = O-phospho-L-seryl-[protein] + ADP + H(+). The enzyme catalyses L-threonyl-[protein] + ATP = O-phospho-L-threonyl-[protein] + ADP + H(+). Its function is as follows. Non-receptor tyrosine-protein and serine/threonine-protein kinase that is implicated in cell spreading and migration, cell survival, cell growth and proliferation. Transduces extracellular signals to cytosolic and nuclear effectors. Phosphorylates AKT1, AR, MCF2, WASL and WWOX. Implicated in trafficking and clathrin-mediated endocytosis through binding to epidermal growth factor receptor (EGFR) and clathrin. Binds to both poly- and mono-ubiquitin and regulates ligand-induced degradation of EGFR, thereby contributing to the accumulation of EGFR at the limiting membrane of early endosomes. Downstream effector of CDC42 which mediates CDC42-dependent cell migration via phosphorylation of BCAR1. May be involved both in adult synaptic function and plasticity and in brain development. Activates AKT1 by phosphorylating it on 'Tyr-176'. Phosphorylates AR on 'Tyr-267' and 'Tyr-363' thereby promoting its recruitment to androgen-responsive enhancers (AREs). Phosphorylates WWOX on 'Tyr-287'. Phosphorylates MCF2, thereby enhancing its activity as a guanine nucleotide exchange factor (GEF) toward Rho family proteins. Contributes to the control of AXL receptor levels. Confers metastatic properties on cancer cells and promotes tumor growth by negatively regulating tumor suppressor such as WWOX and positively regulating pro-survival factors such as AKT1 and AR. In Mus musculus (Mouse), this protein is Activated CDC42 kinase 1 (Tnk2).